The primary structure comprises 174 residues: Small ribosomal subunit protein uS5 (174 aa).

The S5 DRBM domain maps to 16 to 79; the sequence is FSELIVSVRR…NAARKNMIRV (64 aa).

It belongs to the universal ribosomal protein uS5 family. Part of the 30S ribosomal subunit. Contacts proteins S4 and S8.

Its function is as follows. With S4 and S12 plays an important role in translational accuracy. Located at the back of the 30S subunit body where it stabilizes the conformation of the head with respect to the body. This Ehrlichia ruminantium (strain Gardel) protein is Small ribosomal subunit protein uS5.